Consider the following 1093-residue polypeptide: Phosphorylase b kinase regulatory subunit beta (1093 aa).

Ala-2 bears the N-acetylalanine mark. At Ala-4 the chain carries Phosphoserine. Residues 7–29 (LTAEVSWKVLERRARTKRSGSVY) form a calmodulin-binding region. A Phosphoserine; by autocatalysis modification is found at Ser-12. Phosphoserine is present on residues Ser-27 and Ser-701. The interval 689–716 (EPPKHSKVKRQSSTPSAPELGQQPDVNI) is disordered. 2 calmodulin-binding regions span residues 768-795 (RVYR…FSSS) and 920-951 (NGRC…ILER). Cys-1090 is lipidated: S-farnesyl cysteine.

It belongs to the phosphorylase b kinase regulatory chain family. As to quaternary structure, hexadecamer of 4 heterotetramers, each composed of alpha, beta, gamma, and delta subunits. Alpha (PHKA1 or PHKA2) and beta (PHKB) are regulatory subunits, gamma (PHKG1 or PHKG2) is the catalytic subunit, and delta is calmodulin. Post-translationally, ser-701 is probably phosphorylated by PKA. In terms of processing, although the final Cys may be farnesylated, the terminal tripeptide is probably not removed, and the C-terminus is not methylated.

It is found in the cell membrane. It participates in glycan biosynthesis; glycogen metabolism. By phosphorylation of various serine residues. Functionally, phosphorylase b kinase catalyzes the phosphorylation of serine in certain substrates, including troponin I. The beta chain acts as a regulatory unit and modulates the activity of the holoenzyme in response to phosphorylation. The sequence is that of Phosphorylase b kinase regulatory subunit beta (PHKB) from Homo sapiens (Human).